The chain runs to 443 residues: Mimosinase, chloroplastic (443 aa).

The N-terminal 43 residues, 1–43 (MALSSTFLNPLVSSVAVNPQPKITSGKGFRVNCLIRTQQTVIK), are a transit peptide targeting the chloroplast. Tyr-105, Arg-107, Gly-135, Met-136, Ser-254, and Thr-256 together coordinate pyridoxal 5'-phosphate. Lys-257 is modified (N6-(pyridoxal phosphate)lysine).

This sequence belongs to the trans-sulfuration enzymes family. As to quaternary structure, forms homodimers. May form homotetramers from two homodimers. Pyridoxal 5'-phosphate is required as a cofactor.

It is found in the plastid. Its subcellular location is the chloroplast. The catalysed reaction is L-mimosine + H2O = 3-hydroxy-4H-pyrid-4-one + pyruvate + NH4(+). In terms of biological role, catalyzes the degradation of mimosine, which is a toxic secondary metabolite found in all Leucaena and Mimosa species. The polypeptide is Mimosinase, chloroplastic (Leucaena leucocephala (White popinac)).